Reading from the N-terminus, the 130-residue chain is Small ribosomal subunit protein uS4 (130 aa).

An N6-acetyllysine modification is found at Lys64. Lys91 participates in a covalent cross-link: Glycyl lysine isopeptide (Lys-Gly) (interchain with G-Cter in SUMO2). Residues 106 to 130 (RRLQTQVFKLGLAXSIHHXRVLIRQ) form the S4 RNA-binding domain. Position 114 is an N6-acetyllysine (Lys114).

This sequence belongs to the universal ribosomal protein uS4 family. Component of the small ribosomal subunit. Identified in a IGF2BP1-dependent mRNP granule complex containing untranslated mRNAs. Part of the small subunit (SSU) processome, composed of more than 70 proteins and the RNA chaperone small nucleolar RNA (snoRNA) U3.

The protein localises to the cytoplasm. Its subcellular location is the nucleus. It localises to the nucleolus. Functionally, component of the small ribosomal subunit. The ribosome is a large ribonucleoprotein complex responsible for the synthesis of proteins in the cell. Part of the small subunit (SSU) processome, first precursor of the small eukaryotic ribosomal subunit. During the assembly of the SSU processome in the nucleolus, many ribosome biogenesis factors, an RNA chaperone and ribosomal proteins associate with the nascent pre-rRNA and work in concert to generate RNA folding, modifications, rearrangements and cleavage as well as targeted degradation of pre-ribosomal RNA by the RNA exosome. The protein is Small ribosomal subunit protein uS4 (RPS9) of Sus scrofa (Pig).